The chain runs to 318 residues: Methionyl-tRNA formyltransferase (318 aa).

Position 112-115 (112-115 (SILP)) interacts with (6S)-5,6,7,8-tetrahydrofolate.

It belongs to the Fmt family.

It catalyses the reaction L-methionyl-tRNA(fMet) + (6R)-10-formyltetrahydrofolate = N-formyl-L-methionyl-tRNA(fMet) + (6S)-5,6,7,8-tetrahydrofolate + H(+). Functionally, attaches a formyl group to the free amino group of methionyl-tRNA(fMet). The formyl group appears to play a dual role in the initiator identity of N-formylmethionyl-tRNA by promoting its recognition by IF2 and preventing the misappropriation of this tRNA by the elongation apparatus. This chain is Methionyl-tRNA formyltransferase, found in Shewanella baltica (strain OS185).